The chain runs to 210 residues: uncharacterized protein (210 aa).

The protein localises to the mitochondrion. This is an uncharacterized protein from Schizosaccharomyces pombe (strain 972 / ATCC 24843) (Fission yeast).